The following is a 258-amino-acid chain: Imidazole glycerol phosphate synthase subunit HisF (258 aa).

Residues Asp11 and Asp130 contribute to the active site.

The protein belongs to the HisA/HisF family. In terms of assembly, heterodimer of HisH and HisF.

The protein resides in the cytoplasm. It catalyses the reaction 5-[(5-phospho-1-deoxy-D-ribulos-1-ylimino)methylamino]-1-(5-phospho-beta-D-ribosyl)imidazole-4-carboxamide + L-glutamine = D-erythro-1-(imidazol-4-yl)glycerol 3-phosphate + 5-amino-1-(5-phospho-beta-D-ribosyl)imidazole-4-carboxamide + L-glutamate + H(+). It functions in the pathway amino-acid biosynthesis; L-histidine biosynthesis; L-histidine from 5-phospho-alpha-D-ribose 1-diphosphate: step 5/9. In terms of biological role, IGPS catalyzes the conversion of PRFAR and glutamine to IGP, AICAR and glutamate. The HisF subunit catalyzes the cyclization activity that produces IGP and AICAR from PRFAR using the ammonia provided by the HisH subunit. The sequence is that of Imidazole glycerol phosphate synthase subunit HisF from Bradyrhizobium sp. (strain ORS 278).